A 148-amino-acid chain; its full sequence is Lysozyme C, non-stomach isozyme (148 aa).

A signal peptide spans 1-18 (MKALLILGLLLFSVAVQG). The 130-residue stretch at 19 to 148 (KVFERCELAR…LTSYIQGCGV (130 aa)) folds into the C-type lysozyme domain. Intrachain disulfides connect Cys24–Cys146, Cys48–Cys134, Cys83–Cys99, and Cys95–Cys113. Residues Glu53 and Asp71 contribute to the active site.

It belongs to the glycosyl hydrolase 22 family. In terms of tissue distribution, expressed in blood cells.

It carries out the reaction Hydrolysis of (1-&gt;4)-beta-linkages between N-acetylmuramic acid and N-acetyl-D-glucosamine residues in a peptidoglycan and between N-acetyl-D-glucosamine residues in chitodextrins.. Lysozymes have primarily a bacteriolytic function; those in tissues and body fluids are associated with the monocyte-macrophage system and enhance the activity of immunoagents. In Bos taurus (Bovine), this protein is Lysozyme C, non-stomach isozyme (LYS).